Reading from the N-terminus, the 588-residue chain is DNA mismatch repair protein MutL (588 aa).

The protein belongs to the DNA mismatch repair MutL/HexB family.

This protein is involved in the repair of mismatches in DNA. It is required for dam-dependent methyl-directed DNA mismatch repair. May act as a 'molecular matchmaker', a protein that promotes the formation of a stable complex between two or more DNA-binding proteins in an ATP-dependent manner without itself being part of a final effector complex. The chain is DNA mismatch repair protein MutL from Methanocorpusculum labreanum (strain ATCC 43576 / DSM 4855 / Z).